The sequence spans 208 residues: Small ribosomal subunit protein uS4 (208 aa).

The 64-residue stretch at 98–161 folds into the S4 RNA-binding domain; sequence QRLDNVVYRM…KTNPQIVRAI (64 aa).

Belongs to the universal ribosomal protein uS4 family. In terms of assembly, part of the 30S ribosomal subunit. Contacts protein S5. The interaction surface between S4 and S5 is involved in control of translational fidelity.

In terms of biological role, one of the primary rRNA binding proteins, it binds directly to 16S rRNA where it nucleates assembly of the body of the 30S subunit. Functionally, with S5 and S12 plays an important role in translational accuracy. The protein is Small ribosomal subunit protein uS4 of Campylobacter fetus subsp. fetus (strain 82-40).